Reading from the N-terminus, the 91-residue chain is Bombyxin B-1 homolog (91 aa).

Residues 1–19 form the signal peptide; it reads MKVSMFVVIVLCMVAASSA. Intrachain disulfides connect C27-C78, C39-C91, and C77-C82. Residues 49–69 constitute a propeptide, c peptide like; the sequence is SGAQYARYGWQSPESREGARG.

Belongs to the insulin family. In terms of assembly, heterodimer of a B chain and an A chain linked by two disulfide bonds.

Its subcellular location is the secreted. Its function is as follows. Brain peptide responsible for activation of prothoracic glands to produce ecdysone in insects. This Samia cynthia (Ailanthus silkmoth) protein is Bombyxin B-1 homolog (SBXB1).